The chain runs to 120 residues: MFVNRRYTARGKNLPSSPKKVRPIADNIRGKPYSEAVAILCSMPNKCAKLLGKVVKSAASNAMYHNRNLSEDMIFIKTVMVDDGRRRRSVWPRARGRADRLVNRSCHIFVEVYEKMYGGE.

The tract at residues M1–K20 is disordered.

Belongs to the universal ribosomal protein uL22 family. As to quaternary structure, part of the 50S ribosomal subunit.

Functionally, this protein binds specifically to 23S rRNA; its binding is stimulated by other ribosomal proteins, e.g. L4, L17, and L20. It is important during the early stages of 50S assembly. It makes multiple contacts with different domains of the 23S rRNA in the assembled 50S subunit and ribosome. Its function is as follows. The globular domain of the protein is located near the polypeptide exit tunnel on the outside of the subunit, while an extended beta-hairpin is found that lines the wall of the exit tunnel in the center of the 70S ribosome. The sequence is that of Large ribosomal subunit protein uL22 from Borrelia turicatae (strain 91E135).